The sequence spans 377 residues: uncharacterized protein (377 aa).

This is an uncharacterized protein from Caenorhabditis elegans.